We begin with the raw amino-acid sequence, 429 residues long: CinA-like protein (429 aa).

This sequence belongs to the CinA family.

The chain is CinA-like protein from Chlorobium limicola (strain DSM 245 / NBRC 103803 / 6330).